The sequence spans 460 residues: Zinc transporter 6 (460 aa).

Residues 1 to 33 (MGTIHLFRKSQRSLVGKLTHEFRLVAADRRSWK) lie on the Cytoplasmic side of the membrane. The chain crosses the membrane as a helical span at residues 34–54 (ILLFGAINLICIGFLLMWCSS). Over 55-64 (TNSIALTAYT) the chain is Extracellular. The chain crosses the membrane as a helical span at residues 65–85 (YLTIFDLFSLITCLISYWVMV). The Cytoplasmic portion of the chain corresponds to 86–98 (KKPSPVYSFGFER). The chain crosses the membrane as a helical span at residues 99 to 119 (FEVLAVFASTVLAQLGALFIL). Topologically, residues 120–134 (KESAERFLEQPEIHT) are extracellular. The helical transmembrane segment at 135–155 (GRLLVGTFVALFFNLFTMLSV) threads the bilayer. Residues 156 to 200 (RNKPFAYVSEAASTSWLQEHVADLSRSICGIIPGLSSIFLPRMNP) are Cytoplasmic-facing. A helical transmembrane segment spans residues 201-221 (FVLIDIAGALALCITYMLIEI). The Extracellular portion of the chain corresponds to 222–228 (NNYYAVD). Residues 229–249 (TASAIAIALMTFGTMYPMSVY) traverse the membrane as a helical segment. The Cytoplasmic segment spans residues 250-460 (SGKVLLQTTP…GTNTRGQSRP (211 aa)). The segment at 372-392 (PVTSTPAKPSSPPPEFSFNTP) is disordered.

Belongs to the cation diffusion facilitator (CDF) transporter (TC 2.A.4) family. SLC30A subfamily. In terms of assembly, heterodimer with SLC30A5; form a functional zinc ion transmembrane transporter.

The protein localises to the golgi apparatus. It is found in the trans-Golgi network membrane. In terms of biological role, has probably no intrinsic transporter activity but together with SLC30A5 forms a functional zinc ion:proton antiporter heterodimer, mediating zinc entry into the lumen of organelles along the secretory pathway. As part of that zinc ion:proton antiporter, contributes to zinc ion homeostasis within the early secretory pathway and regulates the activation and folding of enzymes like alkaline phosphatases and enzymes involved in phosphatidylinositol glycan anchor biosynthesis. In Gallus gallus (Chicken), this protein is Zinc transporter 6 (SLC30A6).